The following is a 155-amino-acid chain: Archaemetzincin (155 aa).

Zn(2+) is bound at residue histidine 109. The active-site Proton acceptor is the glutamate 110. Zn(2+) is bound by residues histidine 113, histidine 119, cysteine 120, cysteine 125, cysteine 144, and cysteine 147.

It belongs to the peptidase M54 family. Monomer. Zn(2+) is required as a cofactor.

Probable zinc metalloprotease whose natural substrate is unknown. This is Archaemetzincin from Pyrobaculum aerophilum (strain ATCC 51768 / DSM 7523 / JCM 9630 / CIP 104966 / NBRC 100827 / IM2).